Reading from the N-terminus, the 291-residue chain is N-acetylmannosamine kinase (291 aa).

Residues Ala-5–Lys-12 and Gly-132–Cys-139 each bind ATP. 4 residues coordinate Zn(2+): His-156, Cys-166, Cys-168, and Cys-173.

It belongs to the ROK (NagC/XylR) family. NanK subfamily. Homodimer.

It catalyses the reaction an N-acyl-D-mannosamine + ATP = an N-acyl-D-mannosamine 6-phosphate + ADP + H(+). It functions in the pathway amino-sugar metabolism; N-acetylneuraminate degradation; D-fructose 6-phosphate from N-acetylneuraminate: step 2/5. Its function is as follows. Catalyzes the phosphorylation of N-acetylmannosamine (ManNAc) to ManNAc-6-P. The polypeptide is N-acetylmannosamine kinase (Salmonella gallinarum (strain 287/91 / NCTC 13346)).